A 311-amino-acid chain; its full sequence is MKKIPLIILTGPTAVGKTDLSIKLAKDMNAEIISADSMQIYEYMDIGSAKVTEKEMQGVKHYLIDEVKPDYPFSVSEFQQRAKKYIHEINKKEKCVLVTGGTGLYLNSLIYNMDFAQSDANNELREELQKQLAEKGIDYMHNKLKELDEESANRIHKNNTKRVIRALEVCLSGKKMNDFSSDLKFNEEYQPIIIVLNRDREHLYQRINMRVDIMIKNGLVEEVKKLLSMGFKKDMISMQGIGYKEILKYLDGEYTYEEAIEIIKRDSRRYAKRQITWFKRYKTAKWFDLDQYENIDELKNEIILYIKDSIK.

11 to 18 (GPTAVGKT) provides a ligand contact to ATP. Residue 13-18 (TAVGKT) coordinates substrate. An interaction with substrate tRNA region spans residues 36–39 (DSMQ).

This sequence belongs to the IPP transferase family. Monomer. It depends on Mg(2+) as a cofactor.

The enzyme catalyses adenosine(37) in tRNA + dimethylallyl diphosphate = N(6)-dimethylallyladenosine(37) in tRNA + diphosphate. Functionally, catalyzes the transfer of a dimethylallyl group onto the adenine at position 37 in tRNAs that read codons beginning with uridine, leading to the formation of N6-(dimethylallyl)adenosine (i(6)A). This chain is tRNA dimethylallyltransferase, found in Clostridioides difficile (strain 630) (Peptoclostridium difficile).